A 545-amino-acid chain; its full sequence is Cleavage and polyadenylation specificity factor subunit 6 (545 aa).

The interval 37–69 (ISPSANNGDAPEDRDYLDSLPAPGGNEGSKGAP) is disordered. The RRM domain maps to 81–161 (IALYIGNLTW…QNPIVTPCNK (81 aa)). The segment covering 165 to 180 (SQFEMQSRKSTQSGQM) has biased composition (polar residues). Disordered regions lie at residues 165–404 (SQFE…PLSE) and 478–545 (YGSV…YRHR). Residues 184 to 200 (GKAGPPGSGSRGGGFPP) show a composition bias toward gly residues. Composition is skewed to pro residues over residues 220–230 (PVGPGGPPPHF), 237–265 (PRLPSGPPGPLGPPGPPPPGQGLPPPLGG), 287–363 (PMGP…PPGN), and 372–383 (GPPPGDPYGRPP). Composition is skewed to basic and acidic residues over residues 384 to 397 (PYDRDFPGGRDMDA) and 483 to 497 (GRRERSRERDHSRSR). Basic residues predominate over residues 498–508 (EKSRRHKSRSR). Residues 509 to 545 (DRHEDYYRERSRERDRHRERDRDRERDREREREYRHR) show a composition bias toward basic and acidic residues.

It belongs to the RRM CPSF6/7 family. In terms of assembly, component of the cleavage factor Im (CFIm) complex.

It localises to the nucleus. The protein resides in the nucleoplasm. Its subcellular location is the nucleus speckle. The protein localises to the cytoplasm. Functionally, component of the cleavage factor Im (CFIm) complex that functions as an activator of the pre-mRNA 3'-end cleavage and polyadenylation processing required for the maturation of pre-mRNA into functional mRNAs. CFIm contributes to the recruitment of multiprotein complexes on specific sequences on the pre-mRNA 3'-end, so called cleavage and polyadenylation signals (pA signals). Most pre-mRNAs contain multiple pA signals, resulting in alternative cleavage and polyadenylation (APA) producing mRNAs with variable 3'-end formation. The CFIm complex acts as a key regulator of cleavage and polyadenylation site choice during APA through its binding to 5'-UGUA-3' elements localized in the 3'-untranslated region (UTR) for a huge number of pre-mRNAs. Plays a role in mRNA export. The chain is Cleavage and polyadenylation specificity factor subunit 6 from Danio rerio (Zebrafish).